Here is a 195-residue protein sequence, read N- to C-terminus: Capsid protein (195 aa).

The segment at 148-195 is disordered; the sequence is NAPILSTLPETTVVRRRGRSPRRRTPSPRRRRSQSPRRRRSASPASQC. A compositionally biased stretch (basic residues) spans 161–188; it reads VRRRGRSPRRRTPSPRRRRSQSPRRRRS. Residues S167, S174, and S182 each carry the phosphoserine; by host modification. A 1; half-length repeat occupies 167 to 172; it reads SPRRRT. Residues 167–188 form a 3 X 7 AA repeats of S-P-R-R-R-[PR]-S region; sequence SPRRRTPSPRRRRSQSPRRRRS. Residues 170–187 carry the Bipartite nuclear localization signal motif; the sequence is RRTPSPRRRRSQSPRRRR. 2 tandem repeats follow at residues 174 to 180 and 182 to 188. An RNA binding region spans residues 189 to 195; sequence ASPASQC.

Belongs to the orthohepadnavirus core antigen family. Homodimerizes, then multimerizes. Interacts with cytosol exposed regions of viral L glycoprotein present in the reticulum-to-Golgi compartment. Interacts with human FLNB. Phosphorylated form interacts with host importin alpha; this interaction depends on the exposure of the NLS, which itself depends upon genome maturation and/or phosphorylation of the capsid protein. Interacts with host NUP153. Phosphorylated by host SRPK1, SRPK2, and maybe protein kinase C or GAPDH. Phosphorylation is critical for pregenomic RNA packaging. Protein kinase C phosphorylation is stimulated by HBx protein and may play a role in transport of the viral genome to the nucleus at the late step during the viral replication cycle.

Its subcellular location is the virion. It is found in the host cytoplasm. Its function is as follows. Self assembles to form an icosahedral capsid. Most capsids appear to be large particles with an icosahedral symmetry of T=4 and consist of 240 copies of capsid protein, though a fraction forms smaller T=3 particles consisting of 180 capsid proteins. Entering capsids are transported along microtubules to the nucleus. Phosphorylation of the capsid is thought to induce exposure of nuclear localization signal in the C-terminal portion of the capsid protein that allows binding to the nuclear pore complex via the importin (karyopherin-) alpha and beta. Capsids are imported in intact form through the nuclear pore into the nuclear basket, where it probably binds NUP153. Only capsids that contain the mature viral genome can release the viral DNA and capsid protein into the nucleoplasm. Immature capsids get stuck in the basket. Capsids encapsulate the pre-genomic RNA and the P protein. Pre-genomic RNA is reverse-transcribed into DNA while the capsid is still in the cytoplasm. The capsid can then either be directed to the nucleus, providing more genomes for transcription, or bud through the endoplasmic reticulum to provide new virions. This is Capsid protein from Hepatitis B virus genotype G (isolate United States/USG17/2002) (HBV-G).